The chain runs to 425 residues: Enolase (425 aa).

Glutamine 163 provides a ligand contact to (2R)-2-phosphoglycerate. Glutamate 205 functions as the Proton donor in the catalytic mechanism. Positions 242, 285, and 312 each coordinate Mg(2+). Lysine 337, arginine 366, serine 367, and lysine 388 together coordinate (2R)-2-phosphoglycerate. Lysine 337 serves as the catalytic Proton acceptor.

Belongs to the enolase family. Mg(2+) serves as cofactor.

It localises to the cytoplasm. The protein localises to the secreted. It is found in the cell surface. The catalysed reaction is (2R)-2-phosphoglycerate = phosphoenolpyruvate + H2O. Its pathway is carbohydrate degradation; glycolysis; pyruvate from D-glyceraldehyde 3-phosphate: step 4/5. Functionally, catalyzes the reversible conversion of 2-phosphoglycerate (2-PG) into phosphoenolpyruvate (PEP). It is essential for the degradation of carbohydrates via glycolysis. The protein is Enolase of Paracoccus denitrificans (strain Pd 1222).